The primary structure comprises 175 residues: CDP-archaeol synthase (175 aa).

The next 4 helical transmembrane spans lie at 41–61, 82–102, 122–142, and 150–170; these read GLFSGIFCGFLAGCVEVWLSF, LIVVLALASGALFGDMFKSFF, FVVGAWVFTYLAAPEWFVSNF, and VIIITPLLHLTTNIIGYFIGV.

It belongs to the CDP-archaeol synthase family. Mg(2+) serves as cofactor.

It localises to the cell membrane. It carries out the reaction 2,3-bis-O-(geranylgeranyl)-sn-glycerol 1-phosphate + CTP + H(+) = CDP-2,3-bis-O-(geranylgeranyl)-sn-glycerol + diphosphate. Its pathway is membrane lipid metabolism; glycerophospholipid metabolism. In terms of biological role, catalyzes the formation of CDP-2,3-bis-(O-geranylgeranyl)-sn-glycerol (CDP-archaeol) from 2,3-bis-(O-geranylgeranyl)-sn-glycerol 1-phosphate (DGGGP) and CTP. This reaction is the third ether-bond-formation step in the biosynthesis of archaeal membrane lipids. This is CDP-archaeol synthase from Methanosarcina mazei (strain ATCC BAA-159 / DSM 3647 / Goe1 / Go1 / JCM 11833 / OCM 88) (Methanosarcina frisia).